The sequence spans 336 residues: Ornithine carbamoyltransferase, catabolic (336 aa).

Residues 57–60 (STRT), Gln84, Arg108, and 135–138 (HPTQ) contribute to the carbamoyl phosphate site. Residues Asn168, Asp232, and 236 to 237 (SM) each bind L-ornithine. Residues 274–275 (CL) and Arg321 each bind carbamoyl phosphate.

The protein belongs to the aspartate/ornithine carbamoyltransferase superfamily. OTCase family. Nonameric or dodecamer (tetramer of trimers).

It is found in the cytoplasm. The enzyme catalyses carbamoyl phosphate + L-ornithine = L-citrulline + phosphate + H(+). The protein operates within amino-acid degradation; L-arginine degradation via ADI pathway; carbamoyl phosphate from L-arginine: step 2/2. Inhibited by 2-aminopentanoic acid (norvaline). Activated by phosphate and nucleoside monophosphates such as AMP, GMP, CMP, UMP. Allosterically inhibited by the polyamines such as spermidine and putrescine. Its function is as follows. Involved in the catabolism of arginine. Catalyzes the phosphorolysis of citrulline, the reverse reaction of the biosynthetic one, yielding ornithine and carbamoyl phosphate which serve to generate ATP from ADP. This catabolic OTCase does not carry out the biosynthetic reaction because of a poor affinity and a marked cooperativity for carbamoyl phosphate. The chain is Ornithine carbamoyltransferase, catabolic from Pseudomonas aeruginosa (strain ATCC 15692 / DSM 22644 / CIP 104116 / JCM 14847 / LMG 12228 / 1C / PRS 101 / PAO1).